We begin with the raw amino-acid sequence, 118 residues long: Large ribosomal subunit protein bL20 (118 aa).

It belongs to the bacterial ribosomal protein bL20 family.

In terms of biological role, binds directly to 23S ribosomal RNA and is necessary for the in vitro assembly process of the 50S ribosomal subunit. It is not involved in the protein synthesizing functions of that subunit. This Nostoc punctiforme (strain ATCC 29133 / PCC 73102) protein is Large ribosomal subunit protein bL20.